The sequence spans 74 residues: DNA-directed RNA polymerase subunit omega (74 aa).

This sequence belongs to the RNA polymerase subunit omega family. The RNAP catalytic core consists of 2 alpha, 1 beta, 1 beta' and 1 omega subunit. When a sigma factor is associated with the core the holoenzyme is formed, which can initiate transcription.

It carries out the reaction RNA(n) + a ribonucleoside 5'-triphosphate = RNA(n+1) + diphosphate. Its function is as follows. Promotes RNA polymerase assembly. Latches the N- and C-terminal regions of the beta' subunit thereby facilitating its interaction with the beta and alpha subunits. The polypeptide is DNA-directed RNA polymerase subunit omega (Helicobacter pylori (strain Shi470)).